Consider the following 226-residue polypeptide: Leucyl/phenylalanyl-tRNA--protein transferase (226 aa).

It belongs to the L/F-transferase family.

Its subcellular location is the cytoplasm. The catalysed reaction is N-terminal L-lysyl-[protein] + L-leucyl-tRNA(Leu) = N-terminal L-leucyl-L-lysyl-[protein] + tRNA(Leu) + H(+). It carries out the reaction N-terminal L-arginyl-[protein] + L-leucyl-tRNA(Leu) = N-terminal L-leucyl-L-arginyl-[protein] + tRNA(Leu) + H(+). The enzyme catalyses L-phenylalanyl-tRNA(Phe) + an N-terminal L-alpha-aminoacyl-[protein] = an N-terminal L-phenylalanyl-L-alpha-aminoacyl-[protein] + tRNA(Phe). Its function is as follows. Functions in the N-end rule pathway of protein degradation where it conjugates Leu, Phe and, less efficiently, Met from aminoacyl-tRNAs to the N-termini of proteins containing an N-terminal arginine or lysine. The protein is Leucyl/phenylalanyl-tRNA--protein transferase of Pseudomonas aeruginosa (strain UCBPP-PA14).